A 233-amino-acid polypeptide reads, in one-letter code: 5'-methylthioadenosine/S-adenosylhomocysteine nucleosidase (233 aa).

Glu-12 functions as the Proton acceptor in the catalytic mechanism. Substrate-binding positions include Gly-78, Ile-156, and Met-177 to Glu-178. Residue Asp-201 is the Proton donor of the active site.

This sequence belongs to the PNP/UDP phosphorylase family. MtnN subfamily.

The enzyme catalyses S-adenosyl-L-homocysteine + H2O = S-(5-deoxy-D-ribos-5-yl)-L-homocysteine + adenine. It catalyses the reaction S-methyl-5'-thioadenosine + H2O = 5-(methylsulfanyl)-D-ribose + adenine. The catalysed reaction is 5'-deoxyadenosine + H2O = 5-deoxy-D-ribose + adenine. It functions in the pathway amino-acid biosynthesis; L-methionine biosynthesis via salvage pathway; S-methyl-5-thio-alpha-D-ribose 1-phosphate from S-methyl-5'-thioadenosine (hydrolase route): step 1/2. Functionally, catalyzes the irreversible cleavage of the glycosidic bond in both 5'-methylthioadenosine (MTA) and S-adenosylhomocysteine (SAH/AdoHcy) to adenine and the corresponding thioribose, 5'-methylthioribose and S-ribosylhomocysteine, respectively. Also cleaves 5'-deoxyadenosine, a toxic by-product of radical S-adenosylmethionine (SAM) enzymes, into 5-deoxyribose and adenine. The chain is 5'-methylthioadenosine/S-adenosylhomocysteine nucleosidase from Listeria innocua serovar 6a (strain ATCC BAA-680 / CLIP 11262).